Here is a 589-residue protein sequence, read N- to C-terminus: ATP-dependent lipid A-core flippase (589 aa).

6 helical membrane passes run 33–53, 70–90, 148–168, 170–190, 262–282, and 283–303; these read VLAIVCMVLAAAGQAAFAWII, LWVPATLVGIFLFHGVTTFAS, VVVLVRDTFTVIFLLAYMTYL, GWLVMIVFGLGPLVAVVVTAA, LGAVIALAIILYLATMDVILE, and TISPGGMISFIAAMLLMLPPL. Positions 33-315 constitute an ABC transmembrane type-1 domain; the sequence is VLAIVCMVLA…VIGVNAEIQK (283 aa). Positions 347–583 constitute an ABC transporter domain; the sequence is IEFDRVAFRY…NGHYASLHRV (237 aa). Residue 381 to 388 coordinates ATP; the sequence is GRSGSGKT.

This sequence belongs to the ABC transporter superfamily. Lipid exporter (TC 3.A.1.106) family. In terms of assembly, homodimer.

It localises to the cell inner membrane. It catalyses the reaction ATP + H2O + lipid A-core oligosaccharideSide 1 = ADP + phosphate + lipid A-core oligosaccharideSide 2.. Its function is as follows. Involved in lipopolysaccharide (LPS) biosynthesis. Translocates lipid A-core from the inner to the outer leaflet of the inner membrane. Transmembrane domains (TMD) form a pore in the inner membrane and the ATP-binding domain (NBD) is responsible for energy generation. This Alkalilimnicola ehrlichii (strain ATCC BAA-1101 / DSM 17681 / MLHE-1) protein is ATP-dependent lipid A-core flippase.